Consider the following 323-residue polypeptide: tRNA dimethylallyltransferase (323 aa).

Residue 12–19 (GPTAAGKT) participates in ATP binding. 14 to 19 (TAAGKT) is a binding site for substrate. 2 interaction with substrate tRNA regions span residues 37–40 (DSAL) and 161–165 (QRLSR).

Belongs to the IPP transferase family. Monomer. Mg(2+) is required as a cofactor.

The enzyme catalyses adenosine(37) in tRNA + dimethylallyl diphosphate = N(6)-dimethylallyladenosine(37) in tRNA + diphosphate. In terms of biological role, catalyzes the transfer of a dimethylallyl group onto the adenine at position 37 in tRNAs that read codons beginning with uridine, leading to the formation of N6-(dimethylallyl)adenosine (i(6)A). The protein is tRNA dimethylallyltransferase of Pseudomonas fluorescens (strain Pf0-1).